Here is an 842-residue protein sequence, read N- to C-terminus: Elongation factor G, mitochondrial (842 aa).

A mitochondrion-targeting transit peptide spans 1–58 (MVAIPRVAAARSLARQLARQSLRTTSFASAPVRIAIASTPLARSPSSFRSLSSSTRRS). Positions 93–398 (VRQRNVGISA…GVCSYLPNPA (306 aa)) constitute a tr-type G domain. Residues 102–109 (AHIDSGKT), 196–200 (DTPGH), and 250–253 (NKMD) each bind GTP. A disordered region spans residues 423-442 (AGEDQEAAAEARKNAAPPVL).

Belongs to the TRAFAC class translation factor GTPase superfamily. Classic translation factor GTPase family. EF-G/EF-2 subfamily.

Its subcellular location is the mitochondrion. It participates in protein biosynthesis; polypeptide chain elongation. Mitochondrial GTPase that catalyzes the GTP-dependent ribosomal translocation step during translation elongation. During this step, the ribosome changes from the pre-translocational (PRE) to the post-translocational (POST) state as the newly formed A-site-bound peptidyl-tRNA and P-site-bound deacylated tRNA move to the P and E sites, respectively. Catalyzes the coordinated movement of the two tRNA molecules, the mRNA and conformational changes in the ribosome. This is Elongation factor G, mitochondrial from Mycosarcoma maydis (Corn smut fungus).